The following is a 242-amino-acid chain: U1 small nuclear ribonucleoprotein C (242 aa).

The Matrin-type; degenerate zinc finger occupies 3–35; it reads YLGDYCDVYLTHDSMSVRKAHNSGRNHLRNVVE. The interval 60–242 is disordered; it reads GQASSNPMLQ…SSPGPSQEGK (183 aa). Composition is skewed to pro residues over residues 90 to 107, 136 to 149, 156 to 183, and 201 to 213; these read MLPPPPPFGMPGAPPGAP, PPMPGDLPPPPLPN, PFPPPNGFPPNFQFPPPGAAGFPPPPIP, and PVPPPGFPLPGAP. The span at 231–242 shows a compositional bias: polar residues; that stretch reads PASSPGPSQEGK.

It belongs to the U1 small nuclear ribonucleoprotein C family. U1 snRNP is composed of the 7 core Sm proteins B/B', D1, D2, D3, E, F and G that assemble in a heptameric protein ring on the Sm site of the small nuclear RNA to form the core snRNP, and at least 3 U1 snRNP-specific proteins U1-70K, U1-A and U1-C. U1-C interacts with U1 snRNA and the 5' splice-site region of the pre-mRNA.

Its subcellular location is the nucleus. Component of the spliceosomal U1 snRNP, which is essential for recognition of the pre-mRNA 5' splice-site and the subsequent assembly of the spliceosome. U1-C is directly involved in initial 5' splice-site recognition for both constitutive and regulated alternative splicing. The interaction with the 5' splice-site seems to precede base-pairing between the pre-mRNA and the U1 snRNA. Stimulates commitment or early (E) complex formation by stabilizing the base pairing of the 5' end of the U1 snRNA and the 5' splice-site region. The polypeptide is U1 small nuclear ribonucleoprotein C (Ajellomyces capsulatus (strain G186AR / H82 / ATCC MYA-2454 / RMSCC 2432) (Darling's disease fungus)).